We begin with the raw amino-acid sequence, 132 residues long: ATP synthase epsilon chain (132 aa).

Positions I88–E102 are enriched in basic and acidic residues. Positions I88–D112 are disordered.

The protein belongs to the ATPase epsilon chain family. F-type ATPases have 2 components, CF(1) - the catalytic core - and CF(0) - the membrane proton channel. CF(1) has five subunits: alpha(3), beta(3), gamma(1), delta(1), epsilon(1). CF(0) has three main subunits: a, b and c. The F(1)F(0) complex interacts with SpoIIIJ and YqjG; YqgA is found in the same complex.

It is found in the cell membrane. Produces ATP from ADP in the presence of a proton gradient across the membrane. The protein is ATP synthase epsilon chain (atpC) of Bacillus subtilis (strain 168).